We begin with the raw amino-acid sequence, 314 residues long: Acetaldehyde dehydrogenase 1 (314 aa).

Residue 11-14 (SGNI) participates in NAD(+) binding. Cys-129 serves as the catalytic Acyl-thioester intermediate. Residues 160-168 (SAGPGTRAN) and Asn-292 each bind NAD(+).

Belongs to the acetaldehyde dehydrogenase family.

The enzyme catalyses acetaldehyde + NAD(+) + CoA = acetyl-CoA + NADH + H(+). The polypeptide is Acetaldehyde dehydrogenase 1 (Nocardioides sp. (strain ATCC BAA-499 / JS614)).